A 233-amino-acid polypeptide reads, in one-letter code: Large ribosomal subunit protein uL1 (233 aa).

It belongs to the universal ribosomal protein uL1 family. Part of the 50S ribosomal subunit.

Its function is as follows. Binds directly to 23S rRNA. The L1 stalk is quite mobile in the ribosome, and is involved in E site tRNA release. In terms of biological role, protein L1 is also a translational repressor protein, it controls the translation of the L11 operon by binding to its mRNA. The sequence is that of Large ribosomal subunit protein uL1 from Syntrophotalea carbinolica (strain DSM 2380 / NBRC 103641 / GraBd1) (Pelobacter carbinolicus).